Consider the following 525-residue polypeptide: GMP synthase [glutamine-hydrolyzing] (525 aa).

Residues 9–207 (RILILDFGSQ…VLTISGCEAL (199 aa)) enclose the Glutamine amidotransferase type-1 domain. Residue Cys-86 is the Nucleophile of the active site. Catalysis depends on residues His-181 and Glu-183. Residues 208 to 400 (WTPAKIVDDA…LGLPYDMVYR (193 aa)) form the GMPS ATP-PPase domain. 235 to 241 (SGGVDSS) lines the ATP pocket.

In terms of assembly, homodimer.

The catalysed reaction is XMP + L-glutamine + ATP + H2O = GMP + L-glutamate + AMP + diphosphate + 2 H(+). It participates in purine metabolism; GMP biosynthesis; GMP from XMP (L-Gln route): step 1/1. In terms of biological role, catalyzes the synthesis of GMP from XMP. This chain is GMP synthase [glutamine-hydrolyzing], found in Marinobacter nauticus (strain ATCC 700491 / DSM 11845 / VT8) (Marinobacter aquaeolei).